The following is a 273-amino-acid chain: Undecaprenyl-diphosphatase (273 aa).

8 consecutive transmembrane segments (helical) span residues 7–27 (LWIAAILGLVEGLTEFLPVSS), 45–65 (AETFEVVIQLGSILAVVVMFW), 89–109 (LTLIHILLGMVPAVVIGLLLH), 115–135 (LFNPVNVMYALVVGGVLLIAA), 152–171 (TYRQAFMIGCFQCLALWPGF), 189–209 (YAASEFSFLLAVPMMIGATGL), 221–241 (ADFPMFAVGFVTAFIVALIAI), and 253–273 (FIPFAIYRFIVAAAVYALFVL).

Belongs to the UppP family.

Its subcellular location is the cell inner membrane. It carries out the reaction di-trans,octa-cis-undecaprenyl diphosphate + H2O = di-trans,octa-cis-undecaprenyl phosphate + phosphate + H(+). Catalyzes the dephosphorylation of undecaprenyl diphosphate (UPP). Confers resistance to bacitracin. This is Undecaprenyl-diphosphatase from Erwinia tasmaniensis (strain DSM 17950 / CFBP 7177 / CIP 109463 / NCPPB 4357 / Et1/99).